Consider the following 91-residue polypeptide: Small ribosomal subunit protein uS19 (91 aa).

This sequence belongs to the universal ribosomal protein uS19 family.

Its function is as follows. Protein S19 forms a complex with S13 that binds strongly to the 16S ribosomal RNA. The sequence is that of Small ribosomal subunit protein uS19 from Afipia carboxidovorans (strain ATCC 49405 / DSM 1227 / KCTC 32145 / OM5) (Oligotropha carboxidovorans).